The primary structure comprises 295 residues: GTPase Era (295 aa).

Residues 5–172 (YCGYAAIIGR…EQAVHQLMPE (168 aa)) enclose the Era-type G domain. The interval 13–20 (GRPNVGKS) is G1. 13-20 (GRPNVGKS) contacts GTP. The interval 39–43 (QTTRY) is G2. The segment at 60–63 (DTPG) is G3. GTP contacts are provided by residues 60-64 (DTPGL) and 121-124 (NKVD). Positions 121 to 124 (NKVD) are G4. The G5 stretch occupies residues 151-153 (LSA). One can recognise a KH type-2 domain in the interval 203 to 279 (LGQEIPYSLA…FLQLWVKVKS (77 aa)).

It belongs to the TRAFAC class TrmE-Era-EngA-EngB-Septin-like GTPase superfamily. Era GTPase family. Monomer.

It localises to the cytoplasm. The protein resides in the cell inner membrane. An essential GTPase that binds both GDP and GTP, with rapid nucleotide exchange. Plays a role in 16S rRNA processing and 30S ribosomal subunit biogenesis and possibly also in cell cycle regulation and energy metabolism. This Coxiella burnetii (strain CbuK_Q154) (Coxiella burnetii (strain Q154)) protein is GTPase Era.